The following is a 159-amino-acid chain: NADH-quinone oxidoreductase subunit B (159 aa).

[4Fe-4S] cluster is bound by residues Cys-36, Cys-37, Cys-102, and Cys-132.

Belongs to the complex I 20 kDa subunit family. In terms of assembly, NDH-1 is composed of 14 different subunits. Subunits NuoB, C, D, E, F, and G constitute the peripheral sector of the complex. [4Fe-4S] cluster is required as a cofactor.

The protein resides in the cell inner membrane. It carries out the reaction a quinone + NADH + 5 H(+)(in) = a quinol + NAD(+) + 4 H(+)(out). NDH-1 shuttles electrons from NADH, via FMN and iron-sulfur (Fe-S) centers, to quinones in the respiratory chain. Couples the redox reaction to proton translocation (for every two electrons transferred, four hydrogen ions are translocated across the cytoplasmic membrane), and thus conserves the redox energy in a proton gradient. The protein is NADH-quinone oxidoreductase subunit B of Verminephrobacter eiseniae (strain EF01-2).